The primary structure comprises 66 residues: Prokaryotic ubiquitin-like protein UBact (66 aa).

The tract at residues 1-66 (MNMRYTLMPE…AERYRQRTGE (66 aa)) is disordered. The segment covering 30–66 (GGPRRPETGSPDKDNLLKRMRKVDPKQAERYRQRTGE) has biased composition (basic and acidic residues). Glutamate 66 is covalently cross-linked (Isoglutamyl lysine isopeptide (Glu-Lys) (interchain with K-? in acceptor proteins)).

It belongs to the ubiquitin-like protein UBact family.

May function as a protein modifier covalently attached to lysine residues of substrate proteins. This may serve to target the modified proteins for degradation by proteasomes. In Nitrospira moscoviensis, this protein is Prokaryotic ubiquitin-like protein UBact.